The following is a 507-amino-acid chain: Glucose-6-phosphate isomerase (507 aa).

Glu-337 serves as the catalytic Proton donor. Residues His-368 and Lys-478 contribute to the active site.

This sequence belongs to the GPI family.

It is found in the cytoplasm. The enzyme catalyses alpha-D-glucose 6-phosphate = beta-D-fructose 6-phosphate. The protein operates within carbohydrate biosynthesis; gluconeogenesis. It participates in carbohydrate degradation; glycolysis; D-glyceraldehyde 3-phosphate and glycerone phosphate from D-glucose: step 2/4. Catalyzes the reversible isomerization of glucose-6-phosphate to fructose-6-phosphate. The protein is Glucose-6-phosphate isomerase of Novosphingobium aromaticivorans (strain ATCC 700278 / DSM 12444 / CCUG 56034 / CIP 105152 / NBRC 16084 / F199).